We begin with the raw amino-acid sequence, 588 residues long: Endogenous retrovirus group K member 7 Env polyprotein (588 aa).

The tract at residues 355–375 is fusion peptide; it reads FIFTLIAVIMGLIAVTATAAV. The chain crosses the membrane as a helical span at residues 522–542; it reads IGSTTIINLILILVCLFCLLL.

This sequence belongs to the beta type-B retroviral envelope protein family. HERV class-II K(HML-2) env subfamily. The surface (SU) and transmembrane (TM) proteins form a heterodimer. SU and TM are attached by noncovalent interactions or by a labile interchain disulfide bond. Specific enzymatic cleavages in vivo yield the mature SU and TM proteins. Expressed in lung, placenta, testis and peripheral blood lymphocytes.

It is found in the virion. It localises to the cell membrane. Its function is as follows. Retroviral envelope proteins mediate receptor recognition and membrane fusion during early infection. Endogenous envelope proteins may have kept, lost or modified their original function during evolution. Functionally, SU mediates receptor recognition. In terms of biological role, TM anchors the envelope heterodimer to the viral membrane through one transmembrane domain. The other hydrophobic domain, called fusion peptide, mediates fusion of the viral membrane with the target cell membrane. The polypeptide is Endogenous retrovirus group K member 7 Env polyprotein (ERVK-7) (Homo sapiens (Human)).